We begin with the raw amino-acid sequence, 407 residues long: Na(+)-translocating NADH-quinone reductase subunit F (407 aa).

A helical transmembrane segment spans residues 3 to 23 (IILGVVMFTLIVLALTVMILF). Positions 32 to 126 (GDITVEINED…NLKIELPEEI (95 aa)) constitute a 2Fe-2S ferredoxin-type domain. [2Fe-2S] cluster-binding residues include Cys-69, Cys-75, Cys-78, and Cys-110. An FAD-binding FR-type domain is found at 129–269 (VKKWTCEVIS…SGPFGEFFAK (141 aa)).

It belongs to the NqrF family. As to quaternary structure, composed of six subunits; NqrA, NqrB, NqrC, NqrD, NqrE and NqrF. [2Fe-2S] cluster serves as cofactor. FAD is required as a cofactor.

It localises to the cell inner membrane. It catalyses the reaction a ubiquinone + n Na(+)(in) + NADH + H(+) = a ubiquinol + n Na(+)(out) + NAD(+). Functionally, NQR complex catalyzes the reduction of ubiquinone-1 to ubiquinol by two successive reactions, coupled with the transport of Na(+) ions from the cytoplasm to the periplasm. The first step is catalyzed by NqrF, which accepts electrons from NADH and reduces ubiquinone-1 to ubisemiquinone by a one-electron transfer pathway. The sequence is that of Na(+)-translocating NADH-quinone reductase subunit F from Yersinia pseudotuberculosis serotype O:1b (strain IP 31758).